We begin with the raw amino-acid sequence, 85 residues long: Defensin-like protein 11 (85 aa).

A signal peptide spans 1–29 (MGKTISFSAIILVFLLVSTGLMKQGDAQA). 4 disulfides stabilise this stretch: Cys-32-Cys-84, Cys-44-Cys-68, Cys-54-Cys-75, and Cys-58-Cys-77.

It belongs to the DEFL family.

The protein resides in the secreted. In Arabidopsis thaliana (Mouse-ear cress), this protein is Defensin-like protein 11.